Consider the following 225-residue polypeptide: MESFEKLETLLGYSFKNKELLIEALSHPSLRQYHEYKYDKDYERLEFLGDAVLNLLITEILFKNFENYKEGNLAKIRSYLVCKETICIVGTKLALKDYIIMTHGEEVAGGRDNPNNIENATEALIAAIYLDSNIEITHNIIEKLWAEFMKVQNLTDYDPKTALQEWAQANSHHLPIYRLIKREGAAHSSIFTVLVKVKDYEQTCTGYSIKEAEKKAARSLLHRLK.

Positions 4–133 (FEKLETLLGY…LIAAIYLDSN (130 aa)) constitute an RNase III domain. Mg(2+) is bound at residue E46. Residue D50 is part of the active site. The Mg(2+) site is built by N119 and E122. The active site involves E122. In terms of domain architecture, DRBM spans 158 to 225 (DPKTALQEWA…AARSLLHRLK (68 aa)).

This sequence belongs to the ribonuclease III family. Homodimer. It depends on Mg(2+) as a cofactor.

It localises to the cytoplasm. It catalyses the reaction Endonucleolytic cleavage to 5'-phosphomonoester.. In terms of biological role, digests double-stranded RNA. Involved in the processing of primary rRNA transcript to yield the immediate precursors to the large and small rRNAs (23S and 16S). Processes some mRNAs, and tRNAs when they are encoded in the rRNA operon. Processes pre-crRNA and tracrRNA of type II CRISPR loci if present in the organism. This is Ribonuclease 3 from Rickettsia prowazekii (strain Madrid E).